A 469-amino-acid chain; its full sequence is Aspartyl/glutamyl-tRNA(Asn/Gln) amidotransferase subunit B (469 aa).

This sequence belongs to the GatB/GatE family. GatB subfamily. In terms of assembly, heterotrimer of A, B and C subunits.

It catalyses the reaction L-glutamyl-tRNA(Gln) + L-glutamine + ATP + H2O = L-glutaminyl-tRNA(Gln) + L-glutamate + ADP + phosphate + H(+). The enzyme catalyses L-aspartyl-tRNA(Asn) + L-glutamine + ATP + H2O = L-asparaginyl-tRNA(Asn) + L-glutamate + ADP + phosphate + 2 H(+). Its function is as follows. Allows the formation of correctly charged Asn-tRNA(Asn) or Gln-tRNA(Gln) through the transamidation of misacylated Asp-tRNA(Asn) or Glu-tRNA(Gln) in organisms which lack either or both of asparaginyl-tRNA or glutaminyl-tRNA synthetases. The reaction takes place in the presence of glutamine and ATP through an activated phospho-Asp-tRNA(Asn) or phospho-Glu-tRNA(Gln). The polypeptide is Aspartyl/glutamyl-tRNA(Asn/Gln) amidotransferase subunit B (Thermus thermophilus (strain ATCC 27634 / DSM 579 / HB8)).